A 180-amino-acid chain; its full sequence is Stathmin-3 (180 aa).

Residues Cys-22 and Cys-24 are each lipidated (S-palmitoyl cysteine). The region spanning 38–180 is the SLD domain; the sequence is GDMEVKQLDK…NKEQREEMSG (143 aa). A phosphoserine mark is found at Ser-50, Ser-60, Ser-65, Ser-68, Ser-72, Ser-73, and Ser-81. Residues 58 to 82 are disordered; the sequence is LKSPSDLSPESPMLSSPPKRKDTSL. Residues 60–74 are compositionally biased toward low complexity; the sequence is SPSDLSPESPMLSSP. The stretch at 76-179 forms a coiled coil; the sequence is KRKDTSLEEL…RNKEQREEMS (104 aa).

The protein belongs to the stathmin family. In terms of assembly, interacts with STAT3. Interacts with CLU (secreted form); this interaction may act as an important modulator during neuronal differentiation. N-terminal palmitoylation promotes specific anchoring to the cytosolic leaflet of Golgi membranes and subsequent vesicular trafficking along dendrites and axons. Neuronal Stathmins are substrates for palmitoyltransferases ZDHHC3, ZDHHC7 and ZDHHC15.

Its subcellular location is the golgi apparatus. It is found in the cell projection. It localises to the growth cone. The protein localises to the axon. The protein resides in the cytoplasm. Its subcellular location is the cytosol. In terms of biological role, exhibits microtubule-destabilizing activity, which is antagonized by STAT3. The chain is Stathmin-3 (STMN3) from Bos taurus (Bovine).